A 320-amino-acid polypeptide reads, in one-letter code: Zinc finger Ran-binding domain-containing protein 2 (320 aa).

Ser9 carries the phosphoserine modification. The segment at 9–40 (SDGDWICPDKKCGNVNFARRTSCNRCGREKTT) adopts a RanBP2-type 1 zinc-finger fold. N6-acetyllysine occurs at positions 18, 54, and 92. The RanBP2-type 2 zinc-finger motif lies at 65 to 94 (SANDWQCKTCSNVNWARRSECNMCNTPKYA). The segment at 117 to 320 (REESDGEYDE…QVIGENTKQP (204 aa)) is disordered. Phosphoserine occurs at positions 120, 153, 181, 188, and 193. Over residues 150-163 (DKESEGEEEDEDED) the composition is skewed to acidic residues. A required for nuclear targeting region spans residues 151–320 (KESEGEEEDE…QVIGENTKQP (170 aa)). Positions 196–210 (KKSNRRSRSKSRSSH) are enriched in basic residues. Composition is skewed to low complexity over residues 211–224 (SRSSSRSSSPSSSR) and 232–242 (RSSSSSQSRSR). The span at 251 to 273 (SRGSKSRSSSRSHRGSSSPRKRS) shows a compositional bias: basic residues.

Belongs to the ZRANB2 family. Interacts with the C-terminal half of SNRP70/U1-70K, the Arg/Ser-rich domain of AKAP17A as well as with U2AF1 and CLK1. In terms of processing, phosphorylated on Ser-310 upon DNA damage, probably by ATM or ATR.

The protein localises to the nucleus. Its function is as follows. Splice factor required for alternative splicing of TRA2B/SFRS10 transcripts. Binds to ssRNA containing the consensus sequence 5'-AGGUAA-3'. May interfere with constitutive 5'-splice site selection. The chain is Zinc finger Ran-binding domain-containing protein 2 from Pongo abelii (Sumatran orangutan).